A 468-amino-acid polypeptide reads, in one-letter code: TFIIA-alpha and beta-like factor (468 aa).

Disordered regions lie at residues Asp-215 to Pro-236 and Asp-379 to Asp-416. The span at Ser-380 to Ser-391 shows a compositional bias: polar residues. Positions Pro-401–Asp-416 are enriched in acidic residues.

The protein belongs to the TFIIA subunit 1 family. As to expression, testis specific. Expressed in pachytene spermatocytes and haploid spermatids.

It localises to the nucleus. May function as a testis specific transcription factor. Binds DNA in conjunction with GTF2A2 and TBP (the TATA-binding protein) and together with GTF2A2, allows mRNA transcription. This Mus musculus (Mouse) protein is TFIIA-alpha and beta-like factor (Gtf2a1l).